The primary structure comprises 279 residues: Undecaprenyl-diphosphatase (279 aa).

A run of 8 helical transmembrane segments spans residues 2–22, 44–64, 85–105, 113–133, 163–183, 188–208, 225–245, and 255–275; these read LFIE…TEWL, AFME…VIVI, WQLW…AVPL, FNHM…FLWI, VLSI…AIIL, TVAA…YSGL, LLVL…VIKL, and FTVF…YSVF.

This sequence belongs to the UppP family.

It localises to the cell membrane. It catalyses the reaction di-trans,octa-cis-undecaprenyl diphosphate + H2O = di-trans,octa-cis-undecaprenyl phosphate + phosphate + H(+). Its function is as follows. Catalyzes the dephosphorylation of undecaprenyl diphosphate (UPP). Confers resistance to bacitracin. The chain is Undecaprenyl-diphosphatase from Streptococcus equi subsp. zooepidemicus (strain MGCS10565).